The primary structure comprises 522 residues: Signal transduction histidine-protein kinase/phosphatase MprB (522 aa).

Topologically, residues methionine 1 to leucine 30 are cytoplasmic. The helical transmembrane segment at leucine 31–isoleucine 51 threads the bilayer. Topologically, residues serine 52–arginine 167 are extracellular. A helical membrane pass occupies residues tryptophan 168 to valine 188. At threonine 189–arginine 522 the chain is on the cytoplasmic side. An HAMP domain is found at arginine 190 to glutamate 242. The Histidine kinase domain maps to aspartate 250–serine 470. Histidine 253 bears the Phosphohistidine; by autocatalysis mark. Residues proline 467 to arginine 522 are disordered. Residues threonine 502–arginine 522 show a composition bias toward polar residues.

Mg(2+) serves as cofactor. The cofactor is Mn(2+). Post-translationally, autophosphorylated.

It is found in the cell membrane. The enzyme catalyses ATP + protein L-histidine = ADP + protein N-phospho-L-histidine.. Functionally, member of the two-component regulatory system MprB/MprA which contributes to maintaining a balance among several systems involved in stress resistance and is required for establishment and maintenance of persistent infection in the host. In response to environmental signals MprB acts both as a membrane-associated protein kinase that undergoes autophosphorylation and subsequently transfers the phosphate to MprA, and a protein phosphatase that dephosphorylates phospho-MprA. This chain is Signal transduction histidine-protein kinase/phosphatase MprB (mprB), found in Mycolicibacterium paratuberculosis (strain ATCC BAA-968 / K-10) (Mycobacterium paratuberculosis).